The primary structure comprises 892 residues: Protein translocase subunit SecA (892 aa).

ATP contacts are provided by residues Gln89, 107 to 111, and Asp517; that span reads GEGKT. Cys879, Cys881, Cys890, and His891 together coordinate Zn(2+).

Belongs to the SecA family. As to quaternary structure, monomer and homodimer. Part of the essential Sec protein translocation apparatus which comprises SecA, SecYEG and auxiliary proteins SecDF-YajC and YidC. Zn(2+) is required as a cofactor.

It localises to the cell inner membrane. It is found in the cytoplasm. It catalyses the reaction ATP + H2O + cellular proteinSide 1 = ADP + phosphate + cellular proteinSide 2.. Functionally, part of the Sec protein translocase complex. Interacts with the SecYEG preprotein conducting channel. Has a central role in coupling the hydrolysis of ATP to the transfer of proteins into and across the cell membrane, serving as an ATP-driven molecular motor driving the stepwise translocation of polypeptide chains across the membrane. The chain is Protein translocase subunit SecA from Ruthia magnifica subsp. Calyptogena magnifica.